The sequence spans 226 residues: EEF1A lysine methyltransferase 3 (226 aa).

S-adenosyl-L-methionine contacts are provided by residues W57, 83–85, D104, W133, and A150; that span reads GAG.

The protein belongs to the methyltransferase superfamily. METTL21 family. In terms of assembly, interacts with members of the heat shock protein 70 and 90 families and of the TCP-1 chaperonin family, as well as with HSPD1, STIP1 and tubulin; at least some of these proteins may be methylation substrates.

The protein resides in the cytoplasm. It localises to the cytoskeleton. The protein localises to the microtubule organizing center. Its subcellular location is the centrosome. It catalyses the reaction L-lysyl-[protein] + 3 S-adenosyl-L-methionine = N(6),N(6),N(6)-trimethyl-L-lysyl-[protein] + 3 S-adenosyl-L-homocysteine + 3 H(+). The enzyme catalyses L-lysyl-[protein] + S-adenosyl-L-methionine = N(6)-methyl-L-lysyl-[protein] + S-adenosyl-L-homocysteine + H(+). The catalysed reaction is N(6)-methyl-L-lysyl-[protein] + S-adenosyl-L-methionine = N(6),N(6)-dimethyl-L-lysyl-[protein] + S-adenosyl-L-homocysteine + H(+). It carries out the reaction N(6),N(6)-dimethyl-L-lysyl-[protein] + S-adenosyl-L-methionine = N(6),N(6),N(6)-trimethyl-L-lysyl-[protein] + S-adenosyl-L-homocysteine + H(+). In terms of biological role, protein-lysine methyltransferase that selectively mono-, di- and trimethylates 'Lys-165' of the translation elongation factors EEF1A1 and EEF1A2 in an aminoacyl-tRNA and GTP-dependent manner. EEF1A1 methylation by EEF1AKMT3 is dynamic as well as inducible by stress conditions, such as ER-stress, and plays a regulatory role on mRNA translation. In Bos taurus (Bovine), this protein is EEF1A lysine methyltransferase 3.